Here is a 109-residue protein sequence, read N- to C-terminus: Flagellar hook-basal body complex protein FliE (109 aa).

This sequence belongs to the FliE family.

The protein localises to the bacterial flagellum basal body. This Pseudomonas fluorescens (strain SBW25) protein is Flagellar hook-basal body complex protein FliE.